The primary structure comprises 580 residues: Serine/threonine-protein kinase PINK1, mitochondrial (580 aa).

The transit peptide at 1-77 (MAVRQALGRG…RFFRQSVAGL (77 aa)) directs the protein to the mitochondrion. At 78–93 (AARIQRQFMVRARGGA) the chain is on the mitochondrial intermembrane side. Residues 94 to 110 (GPCGRAVFLAFGLGLGL) form a helical membrane-spanning segment. Residues 111 to 117 (IEEKQAE) are required for outer membrane localization. Topologically, residues 111–580 (IEEKQAEGRR…LLLSSWRAAP (470 aa)) are cytoplasmic. The 355-residue stretch at 156 to 510 (YLIGQAIGKG…LAANVLHLSL (355 aa)) folds into the Protein kinase domain. Residues 162–170 (IGKGCNAAV) and K186 each bind ATP. A Phosphoserine; by autocatalysis modification is found at S227. The active-site Proton acceptor is the D361. S401 is modified (phosphoserine; by autocatalysis).

It belongs to the protein kinase superfamily. Ser/Thr protein kinase family. As to quaternary structure, upon mitochondrial depolarization, it forms a supercomplex with TOM and TIM23 complexes. PINK1-TOM-TIM23 supercomplex formation requires PINK1 interaction with TOMM20 and TOMM70 and is critical for PINK1 stabilization at the outer mitochondrial membrane, kinase activation and downstream mitophagy. Upon mitochondrial depolarization, interacts with TIMM23; the interaction is required for PINK1 accumulation at the outer mitochondrial membrane, kinase activation by autophosphorylation and PRKN recruitement to mitochondria. Interacts with PRKN. Interacts with FBXO7. Forms a complex with PRKN and PARK7. Interacts with NENF. Mg(2+) is required as a cofactor. Proteolytically cleaved. In healthy cells, the precursor is continuously imported into the inner mitochondrial membrane (IMM), where it is proteolytically cleaved by mitochondrial-processing peptidase (MPP) and then undergoes further proteolytic cleavage by PARL or AFG3L2 to give rise to the 52 kDa short form. The 52 kDa short form is then released into the cytosol where it rapidly undergoes proteasome-dependent degradation. In unhealthy cells, when cellular stress conditions lead to the loss of mitochondrial membrane potential, mitochondrial import is impaired leading to the precursor accumulating on the outer mitochondrial membrane (OMM). If accumulation at the OMM fails and it is imported into the depolarized mitochondria, it undergoes cleavage by the IMM protease OMA1, promoting its subsequent degradation by the proteasome. Post-translationally, autophosphorylated. Loss of mitochondrial membrane potential results in the precursor accumulating on the outer mitochondrial membrane (OMM) where it is activated by autophosphorylation. Autophosphorylation at Ser-227 and Ser-401 is essential for selective recruitment of PRKN to depolarized mitochondria, via PINK1-dependent phosphorylation of ubiquitin and PRKN. High levels expressed in testis, lower levels in brain, heart, lung, liver and kidney.

Its subcellular location is the mitochondrion outer membrane. It is found in the mitochondrion inner membrane. It localises to the cytoplasm. The protein resides in the cytosol. The catalysed reaction is L-seryl-[protein] + ATP = O-phospho-L-seryl-[protein] + ADP + H(+). It carries out the reaction L-threonyl-[protein] + ATP = O-phospho-L-threonyl-[protein] + ADP + H(+). Serine/threonine-protein kinase which acts as a sensor of mitochondrial damage and protects against mitochondrial dysfunction during cellular stress. It phosphorylates mitochondrial proteins to coordinate mitochondrial quality control mechanisms that remove and replace dysfunctional mitochondrial components. Depending on the severity of mitochondrial damage, activity ranges from preventing apoptosis and stimulating mitochondrial biogenesis to eliminating severely damaged mitochondria via PINK1-PRKN-dependent mitophagy. When cellular stress results in irreversible mitochondrial damage, PINK1 accumulates at the outer mitochondrial membrane (OMM) where it phosphorylates pre-existing polyubiquitin chains at 'Ser-65', recruits PRKN from the cytosol to the OMM and activates PRKN by phosphorylation at 'Ser-65'. Activated PRKN then ubiquinates VDAC1 and other OMM proteins to initiate mitophagy. The PINK1-PRKN pathway also promotes fission of damaged mitochondria by phosphorylating and thus promoting the PRKN-dependent degradation of mitochondrial proteins involved in fission such as MFN2. This prevents the refusion of unhealthy mitochondria with the mitochondrial network or initiates mitochondrial fragmentation facilitating their later engulfment by autophagosomes. Also promotes mitochondrial fission independently of PRKN and ATG7-mediated mitophagy, via the phosphorylation and activation of DNM1L. Regulates motility of damaged mitochondria by promoting the ubiquitination and subsequent degradation of MIRO1 and MIRO2; in motor neurons, this likely inhibits mitochondrial intracellular anterograde transport along the axons which probably increases the chance of the mitochondria undergoing mitophagy in the soma. Required for ubiquinone reduction by mitochondrial complex I by mediating phosphorylation of complex I subunit NDUFA10. Phosphorylates LETM1, positively regulating its mitochondrial calcium transport activity. This chain is Serine/threonine-protein kinase PINK1, mitochondrial (Pink1), found in Mus musculus (Mouse).